A 338-amino-acid polypeptide reads, in one-letter code: Selenocysteine methyltransferase (338 aa).

The Hcy-binding domain occupies Met1–Leu327. Residues Cys245, Cys312, and Cys313 each contribute to the Zn(2+) site.

In terms of assembly, monomer. Requires Zn(2+) as cofactor. In terms of tissue distribution, present in all tissues tested.

It catalyses the reaction S-methyl-L-methionine + L-selenocysteine = Se-methyl-L-selenocysteine + L-methionine + H(+). Catalyzes the methylation of selenocysteine with S-methylmethionine as donor. Does not methylate cysteine. This Astragalus bisulcatus (Two-grooved milkvetch) protein is Selenocysteine methyltransferase (SMTA).